The following is a 140-amino-acid chain: uncharacterized protein (140 aa).

This is an uncharacterized protein from Acholeplasma phage L2 (Bacteriophage L2).